The chain runs to 278 residues: 2-(acetamidomethylene)succinate hydrolase (278 aa).

Chloride is bound by residues I41 and 106-107 (SL). S106 functions as the Nucleophile in the catalytic mechanism. Catalysis depends on residues D130 and H258.

It belongs to the AB hydrolase superfamily. As to quaternary structure, homodimer.

The catalysed reaction is 2-(acetamidomethylene)succinate + 2 H2O + H(+) = succinate semialdehyde + acetate + NH4(+) + CO2. The protein operates within cofactor degradation; B6 vitamer degradation. Functionally, catalyzes the final reaction in the degradation of vitamin B6 from (E)-2-(acetamidomethylene)succinate (E-2AMS) to produce succinic semialdehyde, acetate, ammonia and carbon dioxide. The protein is 2-(acetamidomethylene)succinate hydrolase of Mesorhizobium japonicum (strain LMG 29417 / CECT 9101 / MAFF 303099) (Mesorhizobium loti (strain MAFF 303099)).